The sequence spans 259 residues: Hydroxyacylglutathione hydrolase (259 aa).

The Zn(2+) site is built by His56, His58, Asp60, His61, His112, Asp133, and His171.

Belongs to the metallo-beta-lactamase superfamily. Glyoxalase II family. As to quaternary structure, monomer. It depends on Zn(2+) as a cofactor.

It catalyses the reaction an S-(2-hydroxyacyl)glutathione + H2O = a 2-hydroxy carboxylate + glutathione + H(+). It participates in secondary metabolite metabolism; methylglyoxal degradation; (R)-lactate from methylglyoxal: step 2/2. In terms of biological role, thiolesterase that catalyzes the hydrolysis of S-D-lactoyl-glutathione to form glutathione and D-lactic acid. In Pseudomonas putida (strain ATCC 47054 / DSM 6125 / CFBP 8728 / NCIMB 11950 / KT2440), this protein is Hydroxyacylglutathione hydrolase.